The primary structure comprises 314 residues: MINKHFSSEEIEQDGKSCLLKNARLGVLGGSGLYSIDSIENIKELDIETPYGKPSDSLRIGNLGGMEVVFLARHGRHHIYTPTEIPYRANIWALRSLNVRWILSPSAVGSLQEQVRPLDMVVPDQFIDRTHQRPLTFFCDGAVAHVTMADPFCPTLSRLLAEEGELLMPEARQVHKGGTYLAMEGPAFSTRAESQLYRSWGCKVIGMTNHTEARLAREAEIAYTSLSMVTDYDCWHEGFGNVSVDLVIENLAANAKLASKIVEATAKRISKLLPPSEAHTALKNSLMTSKDKVSETTREKINLFTENYWGKFNK.

Residues Ser31, Arg73–His74, and Ser106–Ala107 contribute to the phosphate site. Residue Met207 coordinates substrate. Thr208 is a binding site for phosphate. Asp231 to Asp233 contacts substrate.

The protein belongs to the PNP/MTAP phosphorylase family. MTAP subfamily. In terms of assembly, homohexamer. Dimer of a homotrimer.

It catalyses the reaction S-methyl-5'-thioadenosine + phosphate = 5-(methylsulfanyl)-alpha-D-ribose 1-phosphate + adenine. It participates in amino-acid biosynthesis; L-methionine biosynthesis via salvage pathway; S-methyl-5-thio-alpha-D-ribose 1-phosphate from S-methyl-5'-thioadenosine (phosphorylase route): step 1/1. Catalyzes the reversible phosphorylation of S-methyl-5'-thioadenosine (MTA) to adenine and 5-methylthioribose-1-phosphate. Involved in the breakdown of MTA, a major by-product of polyamine biosynthesis. Responsible for the first step in the methionine salvage pathway after MTA has been generated from S-adenosylmethionine. Has broad substrate specificity with 6-aminopurine nucleosides as preferred substrates. This chain is S-methyl-5'-thioadenosine phosphorylase, found in Prochlorococcus marinus (strain SARG / CCMP1375 / SS120).